Consider the following 273-residue polypeptide: Shikimate dehydrogenase (NADP(+)) (273 aa).

Shikimate contacts are provided by residues 19–21 (SKS) and threonine 66. The active-site Proton acceptor is lysine 70. Positions 91 and 107 each coordinate shikimate. Residues 131-135 (GAGGA) and methionine 218 contribute to the NADP(+) site. Tyrosine 220 lines the shikimate pocket. Glycine 242 contributes to the NADP(+) binding site.

It belongs to the shikimate dehydrogenase family. Homodimer.

It catalyses the reaction shikimate + NADP(+) = 3-dehydroshikimate + NADPH + H(+). It participates in metabolic intermediate biosynthesis; chorismate biosynthesis; chorismate from D-erythrose 4-phosphate and phosphoenolpyruvate: step 4/7. Involved in the biosynthesis of the chorismate, which leads to the biosynthesis of aromatic amino acids. Catalyzes the reversible NADPH linked reduction of 3-dehydroshikimate (DHSA) to yield shikimate (SA). This is Shikimate dehydrogenase (NADP(+)) from Buchnera aphidicola subsp. Acyrthosiphon pisum (strain 5A).